A 428-amino-acid polypeptide reads, in one-letter code: Histidine--tRNA ligase (428 aa).

It belongs to the class-II aminoacyl-tRNA synthetase family. As to quaternary structure, homodimer.

The protein resides in the cytoplasm. The enzyme catalyses tRNA(His) + L-histidine + ATP = L-histidyl-tRNA(His) + AMP + diphosphate + H(+). The protein is Histidine--tRNA ligase of Lactobacillus delbrueckii subsp. bulgaricus (strain ATCC 11842 / DSM 20081 / BCRC 10696 / JCM 1002 / NBRC 13953 / NCIMB 11778 / NCTC 12712 / WDCM 00102 / Lb 14).